Consider the following 140-residue polypeptide: Large ribosomal subunit protein uL22 (140 aa).

Residues 115 to 140 (AKPAAAKKDPKAAAAKADANAGTKEG) form a disordered region.

It belongs to the universal ribosomal protein uL22 family. As to quaternary structure, part of the 50S ribosomal subunit.

This protein binds specifically to 23S rRNA; its binding is stimulated by other ribosomal proteins, e.g. L4, L17, and L20. It is important during the early stages of 50S assembly. It makes multiple contacts with different domains of the 23S rRNA in the assembled 50S subunit and ribosome. In terms of biological role, the globular domain of the protein is located near the polypeptide exit tunnel on the outside of the subunit, while an extended beta-hairpin is found that lines the wall of the exit tunnel in the center of the 70S ribosome. The sequence is that of Large ribosomal subunit protein uL22 from Heliobacterium modesticaldum (strain ATCC 51547 / Ice1).